A 425-amino-acid polypeptide reads, in one-letter code: Gamma-glutamyl phosphate reductase (425 aa).

The protein belongs to the gamma-glutamyl phosphate reductase family.

The protein resides in the cytoplasm. It catalyses the reaction L-glutamate 5-semialdehyde + phosphate + NADP(+) = L-glutamyl 5-phosphate + NADPH + H(+). It participates in amino-acid biosynthesis; L-proline biosynthesis; L-glutamate 5-semialdehyde from L-glutamate: step 2/2. Catalyzes the NADPH-dependent reduction of L-glutamate 5-phosphate into L-glutamate 5-semialdehyde and phosphate. The product spontaneously undergoes cyclization to form 1-pyrroline-5-carboxylate. This Aromatoleum aromaticum (strain DSM 19018 / LMG 30748 / EbN1) (Azoarcus sp. (strain EbN1)) protein is Gamma-glutamyl phosphate reductase.